The primary structure comprises 145 residues: uncharacterized protein (145 aa).

Residues M1 to R41 are a coiled coil. The disordered stretch occupies residues M1–S91. The segment covering Q7–Q26 has biased composition (low complexity). Basic and acidic residues predominate over residues S27 to S42. The segment covering P43–T58 has biased composition (low complexity).

This is an uncharacterized protein from Dictyostelium discoideum (Social amoeba).